The following is a 158-amino-acid chain: Endoribonuclease YbeY (158 aa).

Zn(2+) is bound by residues His119, His123, and His129.

Belongs to the endoribonuclease YbeY family. It depends on Zn(2+) as a cofactor.

The protein resides in the cytoplasm. In terms of biological role, single strand-specific metallo-endoribonuclease involved in late-stage 70S ribosome quality control and in maturation of the 3' terminus of the 16S rRNA. The sequence is that of Endoribonuclease YbeY from Shewanella sediminis (strain HAW-EB3).